A 182-amino-acid polypeptide reads, in one-letter code: Late embryogenesis abundant protein 3 (182 aa).

The interval 1–51 (MAQHQHSPQRPRDQDNTRPHDQYGIVFSVSGDDVARKQGDSFSQPDPTVAT) is disordered. Residues 7–11 (SPQRP) carry the Nuclear localization signal (NLS) motif. Residues 10-21 (RPRDQDNTRPHD) are compositionally biased toward basic and acidic residues. SMP domains follow at residues 58 to 115 (VTIG…TNEQ) and 123 to 181 (VNIA…LNQQ). A disordered region spans residues 145-182 (EDAEAVVGAELRSSSEMKTTPGGVADSMSAGARLNQQL).

Belongs to the LEA type SMP family.

Its subcellular location is the cytoplasm. The protein resides in the nucleus. Functionally, LEA proteins are late embryonic proteins abundant in higher plant seed embryos. The function of those proteins is not known. The polypeptide is Late embryogenesis abundant protein 3 (Arabidopsis thaliana (Mouse-ear cress)).